The primary structure comprises 234 residues: Phosphoribosylaminoimidazole-succinocarboxamide synthase (234 aa).

Belongs to the SAICAR synthetase family.

The catalysed reaction is 5-amino-1-(5-phospho-D-ribosyl)imidazole-4-carboxylate + L-aspartate + ATP = (2S)-2-[5-amino-1-(5-phospho-beta-D-ribosyl)imidazole-4-carboxamido]succinate + ADP + phosphate + 2 H(+). The protein operates within purine metabolism; IMP biosynthesis via de novo pathway; 5-amino-1-(5-phospho-D-ribosyl)imidazole-4-carboxamide from 5-amino-1-(5-phospho-D-ribosyl)imidazole-4-carboxylate: step 1/2. The polypeptide is Phosphoribosylaminoimidazole-succinocarboxamide synthase (Clostridium botulinum (strain Okra / Type B1)).